A 459-amino-acid polypeptide reads, in one-letter code: Cysteine--tRNA ligase (459 aa).

Cysteine 28 contacts Zn(2+). The 'HIGH' region signature appears at 30 to 40 (VTIYDLCHIGH). Cysteine 209, histidine 234, and glutamate 238 together coordinate Zn(2+). A 'KMSKS' region motif is present at residues 266–270 (KMSKS). Lysine 269 contacts ATP.

This sequence belongs to the class-I aminoacyl-tRNA synthetase family. As to quaternary structure, monomer. It depends on Zn(2+) as a cofactor.

It is found in the cytoplasm. It carries out the reaction tRNA(Cys) + L-cysteine + ATP = L-cysteinyl-tRNA(Cys) + AMP + diphosphate. This is Cysteine--tRNA ligase from Shewanella baltica (strain OS155 / ATCC BAA-1091).